We begin with the raw amino-acid sequence, 264 residues long: Protein ADMETOS (264 aa).

In terms of tissue distribution, paternally imprinted expression in the endosperm.

Functionally, product of a dosage-sensitive gene that contributes to the maintenance of paternally and maternally imprinted gene expression in the endosperm in order to balance parental contributions. Underlies postzygotic reproductive isolation by promoting triploid seed arrest in a genetic dosage-dependent manner, thus being a component of postzygotic interploidy hybridization barriers. This is Protein ADMETOS from Arabidopsis thaliana (Mouse-ear cress).